The primary structure comprises 432 residues: Adenylosuccinate synthetase (432 aa).

GTP-binding positions include 12-18 (GDEGKGK) and 40-42 (GHT). Catalysis depends on Asp-13, which acts as the Proton acceptor. Residues Asp-13 and Gly-40 each contribute to the Mg(2+) site. IMP contacts are provided by residues 13–16 (DEGK), 38–41 (NAGH), Thr-129, Arg-143, Gln-224, Thr-239, and Arg-303. The active-site Proton donor is the His-41. 299-305 (VTTGRRR) contacts substrate. Residues Arg-305, 331–333 (KLD), and 413–415 (GVG) each bind GTP.

It belongs to the adenylosuccinate synthetase family. Homodimer. The cofactor is Mg(2+).

It is found in the cytoplasm. It carries out the reaction IMP + L-aspartate + GTP = N(6)-(1,2-dicarboxyethyl)-AMP + GDP + phosphate + 2 H(+). The protein operates within purine metabolism; AMP biosynthesis via de novo pathway; AMP from IMP: step 1/2. Functionally, plays an important role in the de novo pathway of purine nucleotide biosynthesis. Catalyzes the first committed step in the biosynthesis of AMP from IMP. In Mycolicibacterium paratuberculosis (strain ATCC BAA-968 / K-10) (Mycobacterium paratuberculosis), this protein is Adenylosuccinate synthetase.